The primary structure comprises 142 residues: Hemoglobin anodic subunit alpha (142 aa).

S1 bears the N-acetylserine mark. Residues 1-142 (SLSTKDKAVV…LALALADRYR (142 aa)) form the Globin domain. H59 is an O2 binding site. H88 is a heme b binding site.

This sequence belongs to the globin family. Heterotetramer of two alpha chains and two beta chains. Red blood cells.

In terms of biological role, involved in oxygen transport from gills to the various peripheral tissues. This Gymnothorax unicolor (Brown moray) protein is Hemoglobin anodic subunit alpha.